The primary structure comprises 80 residues: Homeobox protein 7 (80 aa).

The homeobox DNA-binding region spans 8–67 (SNIRNIRSSGISTKKLEDFFSINQYPNKNEIKDFANYYQCDETKIKNWFKGKRDRLKKKS). The disordered stretch occupies residues 60–80 (RDRLKKKSSNNEKSGNKFYFK). Residues 70–80 (NEKSGNKFYFK) show a composition bias toward low complexity.

It is found in the nucleus. Putative transcription factor. The polypeptide is Homeobox protein 7 (hbx7) (Dictyostelium discoideum (Social amoeba)).